Reading from the N-terminus, the 58-residue chain is Ribulose bisphosphate carboxylase large chain (58 aa).

The propeptide occupies 1–2 (MS). Pro3 is modified (N-acetylproline). Lys14 is modified (N6,N6,N6-trimethyllysine).

It belongs to the RuBisCO large chain family. Type I subfamily. In terms of assembly, heterohexadecamer of 8 large chains and 8 small chains.

It localises to the plastid. It is found in the chloroplast. The catalysed reaction is 2 (2R)-3-phosphoglycerate + 2 H(+) = D-ribulose 1,5-bisphosphate + CO2 + H2O. The enzyme catalyses D-ribulose 1,5-bisphosphate + O2 = 2-phosphoglycolate + (2R)-3-phosphoglycerate + 2 H(+). Functionally, ruBisCO catalyzes two reactions: the carboxylation of D-ribulose 1,5-bisphosphate, the primary event in carbon dioxide fixation, as well as the oxidative fragmentation of the pentose substrate in the photorespiration process. Both reactions occur simultaneously and in competition at the same active site. The chain is Ribulose bisphosphate carboxylase large chain (rbcL) from Euphorbia characias (Albanian spurge).